We begin with the raw amino-acid sequence, 389 residues long: Succinate--CoA ligase [ADP-forming] subunit beta (389 aa).

The ATP-grasp domain occupies 9-236 (KELFAKHGVP…RDATDPLELK (228 aa)). ATP is bound by residues lysine 45, 52 to 54 (GRG), serine 94, and glutamate 99. Residues asparagine 191 and aspartate 205 each contribute to the Mg(2+) site. Substrate contacts are provided by residues asparagine 256 and 318–320 (GIT).

The protein belongs to the succinate/malate CoA ligase beta subunit family. In terms of assembly, heterotetramer of two alpha and two beta subunits. The cofactor is Mg(2+).

It catalyses the reaction succinate + ATP + CoA = succinyl-CoA + ADP + phosphate. The enzyme catalyses GTP + succinate + CoA = succinyl-CoA + GDP + phosphate. The protein operates within carbohydrate metabolism; tricarboxylic acid cycle; succinate from succinyl-CoA (ligase route): step 1/1. Its function is as follows. Succinyl-CoA synthetase functions in the citric acid cycle (TCA), coupling the hydrolysis of succinyl-CoA to the synthesis of either ATP or GTP and thus represents the only step of substrate-level phosphorylation in the TCA. The beta subunit provides nucleotide specificity of the enzyme and binds the substrate succinate, while the binding sites for coenzyme A and phosphate are found in the alpha subunit. In Rhodococcus erythropolis (strain PR4 / NBRC 100887), this protein is Succinate--CoA ligase [ADP-forming] subunit beta.